A 226-amino-acid polypeptide reads, in one-letter code: 2-C-methyl-D-erythritol 4-phosphate cytidylyltransferase (226 aa).

The protein belongs to the IspD/TarI cytidylyltransferase family. IspD subfamily.

It catalyses the reaction 2-C-methyl-D-erythritol 4-phosphate + CTP + H(+) = 4-CDP-2-C-methyl-D-erythritol + diphosphate. The protein operates within isoprenoid biosynthesis; isopentenyl diphosphate biosynthesis via DXP pathway; isopentenyl diphosphate from 1-deoxy-D-xylulose 5-phosphate: step 2/6. Its function is as follows. Catalyzes the formation of 4-diphosphocytidyl-2-C-methyl-D-erythritol from CTP and 2-C-methyl-D-erythritol 4-phosphate (MEP). The chain is 2-C-methyl-D-erythritol 4-phosphate cytidylyltransferase from Bacillus cereus (strain ATCC 10987 / NRS 248).